We begin with the raw amino-acid sequence, 61 residues long: Large ribosomal subunit protein uL30 (61 aa).

Belongs to the universal ribosomal protein uL30 family. Part of the 50S ribosomal subunit.

The sequence is that of Large ribosomal subunit protein uL30 from Lactobacillus acidophilus (strain ATCC 700396 / NCK56 / N2 / NCFM).